The chain runs to 616 residues: Carboxylic acid transporter protein homolog (616 aa).

Residues methionine 1–serine 11 show a composition bias toward basic and acidic residues. The tract at residues methionine 1–glutamine 65 is disordered. N-acetylserine is present on serine 2. The Cytoplasmic segment spans residues serine 2–asparagine 140. The residue at position 4 (serine 4) is a Phosphoserine. Residue lysine 9 forms a Glycyl lysine isopeptide (Lys-Gly) (interchain with G-Cter in ubiquitin) linkage. Phosphoserine occurs at positions 11, 61, and 66. Phosphothreonine is present on threonine 70. A helical transmembrane segment spans residues tyrosine 141–valine 161. The Extracellular portion of the chain corresponds to serine 162–aspartate 176. The chain crosses the membrane as a helical span at residues isoleucine 177–leucine 197. Residues tryptophan 198–lysine 205 are Cytoplasmic-facing. A helical transmembrane segment spans residues tryptophan 206 to aspartate 226. Topologically, residues threonine 227–lysine 230 are extracellular. The chain crosses the membrane as a helical span at residues phenylalanine 231–alanine 251. Over threonine 252–serine 263 the chain is Cytoplasmic. A helical transmembrane segment spans residues phenylalanine 264–tyrosine 284. Topologically, residues arginine 285–lysine 296 are extracellular. Residues isoleucine 297–proline 317 form a helical membrane-spanning segment. Residues glutamate 318–lysine 363 lie on the Cytoplasmic side of the membrane. A Glycyl lysine isopeptide (Lys-Gly) (interchain with G-Cter in ubiquitin) cross-link involves residue lysine 338. Residues tyrosine 364 to alanine 384 form a helical membrane-spanning segment. The Extracellular segment spans residues serine 385–aspartate 402. Residues alanine 403–glycine 423 traverse the membrane as a helical segment. The Cytoplasmic segment spans residues glutamine 424–arginine 432. A helical membrane pass occupies residues leucine 433–arginine 453. At serine 454–alanine 457 the chain is on the extracellular side. A helical transmembrane segment spans residues isoleucine 458–isoleucine 478. Over histidine 479–arginine 489 the chain is Cytoplasmic. A helical membrane pass occupies residues alanine 490 to isoleucine 510. Residues glutamate 511–lysine 535 lie on the Extracellular side of the membrane. A helical membrane pass occupies residues valine 536 to histidine 556. The Cytoplasmic segment spans residues glutamate 557–valine 616. Phosphoserine occurs at positions 584, 603, and 606.

Belongs to the major facilitator superfamily. Sugar transporter (TC 2.A.1.1) family.

It localises to the membrane. In terms of biological role, essential to lactate transport. The protein is Carboxylic acid transporter protein homolog (JEN1) of Saccharomyces cerevisiae (strain ATCC 204508 / S288c) (Baker's yeast).